The primary structure comprises 189 residues: Movement protein p22 (189 aa).

The protein belongs to the tombusvirus/aureusvirus movement protein p22 family. As to quaternary structure, interacts with host protein HFI22. In terms of processing, phosphorylated.

It is found in the host membrane. Functionally, cell-to-cell movement. Displays RNA-binding activity. The polypeptide is Movement protein p22 (Capsicum annuum (Capsicum pepper)).